A 59-amino-acid chain; its full sequence is Large ribosomal subunit protein uL30 (59 aa).

The protein belongs to the universal ribosomal protein uL30 family. As to quaternary structure, part of the 50S ribosomal subunit.

This chain is Large ribosomal subunit protein uL30, found in Leptospira borgpetersenii serovar Hardjo-bovis (strain JB197).